A 913-amino-acid chain; its full sequence is SUN domain-containing protein 1 (913 aa).

The LMNA-binding stretch occupies residues 1–139 (MDFSRLHTYT…VLRHPVLDES (139 aa)). Residues 1 to 415 (MDFSRLHTYT…LTRCLRNICK (415 aa)) lie on the Nuclear side of the membrane. Phosphoserine occurs at positions 48 and 66. Over residues 69–81 (SQAIDSHISTSRA) the composition is skewed to polar residues. The tract at residues 69–120 (SQAIDSHISTSRATPAKGRETRTVKQRRSASKPAFSINHLSGKGLSSSTSHD) is disordered. Residues 108 to 120 (LSGKGLSSSTSHD) show a composition bias toward low complexity. Serine 139 is modified (phosphoserine). The segment at 209–302 (SRVYSRDRTL…MTAGELSRVD (94 aa)) is SYNE2-binding. The interval 223–302 (VSFYLDRTLW…MTAGELSRVD (80 aa)) is EMD-binding. The chain crosses the membrane as a helical span at residues 416–436 (VFVLLLPLLLLLGAGVSLWGQ). Topologically, residues 437–913 (GNFFSLLPVL…RFRVHGEPIQ (477 aa)) are perinuclear space. Positions 456-485 (RVDDSKGMHRPGPLPPSPPPKVDHKASQWP) are disordered. 2 coiled-coil regions span residues 491 to 533 (GQKV…EGLS) and 563 to 638 (HHDH…CEQA). Residues 703–913 (TSEAIVSAVN…RFRVHGEPIQ (211 aa)) form a sufficient for interaction with SYNE1 and SYNE2 region. Residues 751–912 (GGSILSTRCS…YRFRVHGEPI (162 aa)) form the SUN domain.

In terms of assembly, core component of the LINC complex which is composed of inner nuclear membrane SUN domain-containing proteins coupled to outer nuclear membrane KASH domain-containing nesprins. SUN and KASH domain-containing proteins seem to bind each other promiscuously; however, differentially expression of LINC complex constituents is giving rise to specific assemblies. At least SUN1/2-containing core LINC complexes are proposed to be hexameric composed of three protomers of each KASH and SUN domain-containing protein. Interacts with KASH5 (via the last 22 amino acids); this interaction mediates KASH5 telomere localization by forming a SUN1:KASH5 LINC complex. Isoform 5 is proposed to form a non-nuclear spermatogenesis-specific LINC complex with SYNE3 during sperm head formation. Interacts with SYNE2 and SYNE1; probably forming respective LINC complexes. Interacts with A-type lamin with a strong preference for unprocessed A-type lamin compared with the mature protein. Interaction with lamins B1 and C is hardly detectable. Interacts with NAT10. Interacts with EMD and TSNAX. Associates with the nuclear pore complex (NPC). Interacts with CCDC79/TERB1; promoting the accumulation of the LINC complex complexes at the telomere-nuclear envelope attachment sites. Interacts with IRAG2. Interacts (via KASH domain) with TMEM258. The disulfide bond with KASH domain-containing nesprins is required for stability of the respective LINC complexes under tensile forces. In terms of tissue distribution, widely expressed. Expressed in cochlear outer hair cells (at protein level). Seven isoforms are expressed in testis including testis-specific isoform 5. Isoform 5 is the only isoform expressed at the end of sperm differentiation. Six isoforms are expressed in muscle, heart and brain, four isoforms in kidney and three isoforms in liver.

It is found in the nucleus inner membrane. The protein localises to the cytoplasmic vesicle. The protein resides in the secretory vesicle. It localises to the acrosome outer membrane. As a component of the LINC (LInker of Nucleoskeleton and Cytoskeleton) complex involved in the connection between the nuclear lamina and the cytoskeleton. The nucleocytoplasmic interactions established by the LINC complex play an important role in the transmission of mechanical forces across the nuclear envelope and in nuclear movement and positioning. Required for interkinetic nuclear migration (INM) and essential for nucleokinesis and centrosome-nucleus coupling during radial neuronal migration in the cerebral cortex and during glial migration. Involved in telomere attachment to nuclear envelope in the prophase of meiosis implicating a SUN1/2:KASH5 LINC complex in which SUN1 and SUN2 seem to act at least partial redundantly. Required for gametogenesis and involved in selective gene expression of coding and non-coding RNAs needed for gametogenesis. Helps to define the distribution of nuclear pore complexes (NPCs). Required for efficient localization of SYNE4 in the nuclear envelope. May be involved in nuclear remodeling during sperm head formation in spermatogenesis. May play a role in DNA repair by suppressing non-homologous end joining repair to facilitate the repair of DNA cross-links. In terms of biological role, isoform 5 may be involved in nuclear remodeling during sperm head formation in spermatogenesis. A probable SUN1 isoform 5:SYNE3 LINC complex may tether spermatid nuclei to anterior cytoskeletal structures such as actin filaments present at membraneous junctions of spermatids and Sertoli cells. The polypeptide is SUN domain-containing protein 1 (Mus musculus (Mouse)).